A 162-amino-acid polypeptide reads, in one-letter code: Peptidyl-prolyl cis-trans isomerase-like 1 (162 aa).

The PPIase cyclophilin-type domain occupies 1–155 (MATDVAFDTS…DGVKILRARI (155 aa)).

This sequence belongs to the cyclophilin-type PPIase family. PPIL1 subfamily.

It catalyses the reaction [protein]-peptidylproline (omega=180) = [protein]-peptidylproline (omega=0). PPIases accelerate the folding of proteins. It catalyzes the cis-trans isomerization of proline imidic peptide bonds in oligopeptides. The polypeptide is Peptidyl-prolyl cis-trans isomerase-like 1 (cypC) (Aspergillus niger).